A 385-amino-acid polypeptide reads, in one-letter code: Type III polyketide synthase C (385 aa).

A CoA-binding site is contributed by 56-63; it reads KLQHLCKS. C165 functions as the Nucleophile in the catalytic mechanism. 217-218 lines the substrate pocket; sequence GD. CoA contacts are provided by residues L267, 307–310, and A310; that span reads GGPA.

It belongs to the thiolase-like superfamily. Chalcone/stilbene synthases family. As to quaternary structure, homodimer.

It localises to the endoplasmic reticulum. The protein operates within secondary metabolite biosynthesis; flavonoid biosynthesis. Its function is as follows. Plant type III polyketide synthases (PKSs) that catalyzes the condensation of malonyl-CoA units with various CoA ester starter molecules to generate a diverse array of natural products including long-chain alkyl alpha-pyrones. This is Type III polyketide synthase C from Arabidopsis thaliana (Mouse-ear cress).